The primary structure comprises 396 residues: Calsequestrin-1 (396 aa).

Positions 1–34 (MSATDRMGPRAVPGLRLALLLLLVLGTPKSGVQG) are cleaved as a signal peptide. Residue tyrosine 43 is modified to Phosphotyrosine. Position 81 is a phosphoserine (serine 81). Threonine 124 bears the Phosphothreonine mark. Serine 216 carries the post-translational modification Phosphoserine. Residue asparagine 350 is glycosylated (N-linked (GlcNAc...) asparagine).

Belongs to the calsequestrin family. In terms of assembly, monomer; increases in response to a depletion of intracellular calcium. Homodimer. Homotetramer and homopolymer. Can form linear homooligomers. Ca(2+) ions promote oligomerization. Interacts (via C-terminal end and preferentially with the monomeric form) with STIM1; this interaction increases in response to a depletion of intracellular calcium, decreases both STIM1 aggregation and clustering, interaction of STIM1 with ORAI1 and store-operated Ca(2+) entry (SOCE) activity. Interacts with ASPH and TRDN. Post-translationally, N-glycosylated. As to expression, expressed in myoblasts (at protein level).

The protein localises to the endoplasmic reticulum. It localises to the sarcoplasmic reticulum. It is found in the sarcoplasmic reticulum lumen. Its subcellular location is the sarcoplasmic reticulum membrane. The protein resides in the mitochondrion matrix. Functionally, calsequestrin is a high-capacity, moderate affinity, calcium-binding protein and thus acts as an internal calcium store in muscle. Calcium ions are bound by clusters of acidic residues at the protein surface, often at the interface between subunits. Can bind around 80 Ca(2+) ions. Regulates the release of lumenal Ca(2+) via the calcium release channel RYR1; this plays an important role in triggering muscle contraction. Negatively regulates store-operated Ca(2+) entry (SOCE) activity. This is Calsequestrin-1 (CASQ1) from Homo sapiens (Human).